A 388-amino-acid chain; its full sequence is LL-diaminopimelate aminotransferase (388 aa).

Substrate contacts are provided by Tyr-13, Gly-38, Lys-102, Tyr-126, and Asn-176. Pyridoxal 5'-phosphate contacts are provided by residues 101–102, Tyr-126, Asn-176, Tyr-207, and 235–237; these read SK and SLS. Lys-238 carries the post-translational modification N6-(pyridoxal phosphate)lysine. Residue Arg-246 participates in pyridoxal 5'-phosphate binding. Arg-364 contributes to the substrate binding site.

The protein belongs to the class-I pyridoxal-phosphate-dependent aminotransferase family. LL-diaminopimelate aminotransferase subfamily. Homodimer. It depends on pyridoxal 5'-phosphate as a cofactor.

It catalyses the reaction (2S,6S)-2,6-diaminopimelate + 2-oxoglutarate = (S)-2,3,4,5-tetrahydrodipicolinate + L-glutamate + H2O + H(+). Its pathway is amino-acid biosynthesis; L-lysine biosynthesis via DAP pathway; LL-2,6-diaminopimelate from (S)-tetrahydrodipicolinate (aminotransferase route): step 1/1. Involved in the synthesis of meso-diaminopimelate (m-DAP or DL-DAP), required for both lysine and peptidoglycan biosynthesis. Catalyzes the direct conversion of tetrahydrodipicolinate to LL-diaminopimelate. The sequence is that of LL-diaminopimelate aminotransferase from Dehalococcoides mccartyi (strain ATCC BAA-2266 / KCTC 15142 / 195) (Dehalococcoides ethenogenes (strain 195)).